Reading from the N-terminus, the 550-residue chain is Dihydroxy-acid dehydratase (550 aa).

Asp-78 contributes to the Mg(2+) binding site. Cys-119 provides a ligand contact to [2Fe-2S] cluster. Positions 120 and 121 each coordinate Mg(2+). Lys-121 carries the post-translational modification N6-carboxylysine. Cys-191 contributes to the [2Fe-2S] cluster binding site. Glu-440 serves as a coordination point for Mg(2+). Ser-466 functions as the Proton acceptor in the catalytic mechanism.

Belongs to the IlvD/Edd family. In terms of assembly, homodimer. [2Fe-2S] cluster serves as cofactor. The cofactor is Mg(2+).

The enzyme catalyses (2R)-2,3-dihydroxy-3-methylbutanoate = 3-methyl-2-oxobutanoate + H2O. It carries out the reaction (2R,3R)-2,3-dihydroxy-3-methylpentanoate = (S)-3-methyl-2-oxopentanoate + H2O. The protein operates within amino-acid biosynthesis; L-isoleucine biosynthesis; L-isoleucine from 2-oxobutanoate: step 3/4. Its pathway is amino-acid biosynthesis; L-valine biosynthesis; L-valine from pyruvate: step 3/4. Functions in the biosynthesis of branched-chain amino acids. Catalyzes the dehydration of (2R,3R)-2,3-dihydroxy-3-methylpentanoate (2,3-dihydroxy-3-methylvalerate) into 2-oxo-3-methylpentanoate (2-oxo-3-methylvalerate) and of (2R)-2,3-dihydroxy-3-methylbutanoate (2,3-dihydroxyisovalerate) into 2-oxo-3-methylbutanoate (2-oxoisovalerate), the penultimate precursor to L-isoleucine and L-valine, respectively. This chain is Dihydroxy-acid dehydratase, found in Methanococcus maripaludis (strain DSM 14266 / JCM 13030 / NBRC 101832 / S2 / LL).